We begin with the raw amino-acid sequence, 62 residues long: Photosystem II reaction center protein Z (62 aa).

The next 2 membrane-spanning stretches (helical) occupy residues 8–28 (ALISLVLVSFVLVVGVPVAYA) and 41–61 (WLGSGVWIALVLLVGLLNFFV).

The protein belongs to the PsbZ family. PSII is composed of 1 copy each of membrane proteins PsbA, PsbB, PsbC, PsbD, PsbE, PsbF, PsbH, PsbI, PsbJ, PsbK, PsbL, PsbM, PsbT, PsbX, PsbY, PsbZ, Psb30/Ycf12, peripheral proteins PsbO, CyanoQ (PsbQ), PsbU, PsbV and a large number of cofactors. It forms dimeric complexes.

It localises to the cellular thylakoid membrane. Functionally, may control the interaction of photosystem II (PSII) cores with the light-harvesting antenna, regulates electron flow through the 2 photosystem reaction centers. PSII is a light-driven water plastoquinone oxidoreductase, using light energy to abstract electrons from H(2)O, generating a proton gradient subsequently used for ATP formation. This Trichormus variabilis (strain ATCC 29413 / PCC 7937) (Anabaena variabilis) protein is Photosystem II reaction center protein Z.